Here is a 378-residue protein sequence, read N- to C-terminus: Erythronate-4-phosphate dehydrogenase (378 aa).

The substrate site is built by serine 45 and threonine 66. Positions 146 and 175 each coordinate NAD(+). Residue arginine 208 is part of the active site. Aspartate 232 is a binding site for NAD(+). The active site involves glutamate 237. Histidine 254 acts as the Proton donor in catalysis. NAD(+) is bound at residue glycine 257. Residue tyrosine 258 participates in substrate binding.

Belongs to the D-isomer specific 2-hydroxyacid dehydrogenase family. PdxB subfamily. As to quaternary structure, homodimer.

It localises to the cytoplasm. It catalyses the reaction 4-phospho-D-erythronate + NAD(+) = (R)-3-hydroxy-2-oxo-4-phosphooxybutanoate + NADH + H(+). It participates in cofactor biosynthesis; pyridoxine 5'-phosphate biosynthesis; pyridoxine 5'-phosphate from D-erythrose 4-phosphate: step 2/5. Its function is as follows. Catalyzes the oxidation of erythronate-4-phosphate to 3-hydroxy-2-oxo-4-phosphonooxybutanoate. The sequence is that of Erythronate-4-phosphate dehydrogenase from Escherichia coli O157:H7.